A 336-amino-acid chain; its full sequence is CST complex subunit STN1 (336 aa).

The OB DNA-binding region spans 49–126 (VDILGTVVCV…EVVASIFYKV (78 aa)). 2 winged helix-turn-helix (wHTH) regions span residues 162–263 (QSQE…YVTD) and 264–336 (HDKE…YTAF).

The protein belongs to the CTC1 family. As to quaternary structure, component of the CST complex.

The protein localises to the nucleus. The protein resides in the chromosome. Its subcellular location is the telomere. Functionally, component of the CST complex proposed to act as a specialized replication factor promoting DNA replication under conditions of replication stress or natural replication barriers such as the telomere duplex. The CST complex binds single-stranded DNA with high affinity in a sequence-independent manner, while isolated subunits bind DNA with low affinity by themselves. Initially the CST complex has been proposed to protect telomeres from DNA degradation. However, the CST complex has been shown to be involved in several aspects of telomere replication. This is CST complex subunit STN1 from Aquarana catesbeiana (American bullfrog).